The following is an 86-amino-acid chain: Toxin Aam2 (86 aa).

Positions 1-20 are cleaved as a signal peptide; sequence MNYLITISLALLLMTGVASG. The LCN-type CS-alpha/beta domain occupies 22–84; that stretch reads RDGYIADAGN…VPIKVPGKCN (63 aa). 4 disulfides stabilise this stretch: Cys-32–Cys-83, Cys-36–Cys-56, Cys-42–Cys-66, and Cys-46–Cys-68. An Asparagine amide modification is found at Asn-84.

The protein belongs to the long (4 C-C) scorpion toxin superfamily. Sodium channel inhibitor family. Alpha subfamily. As to expression, expressed by the venom gland.

It localises to the secreted. Functionally, alpha toxins bind voltage-independently at site-3 of sodium channels (Nav) and inhibit the inactivation of the activated channels, thereby blocking neuronal transmission. The polypeptide is Toxin Aam2 (Androctonus amoreuxi (African fattail scorpion)).